Here is a 189-residue protein sequence, read N- to C-terminus: ADP-ribosylation factor H (189 aa).

Residues 34–40 (DGAGKST), 75–79 (DVGGQ), and 134–137 (NKQD) each bind GTP.

Belongs to the small GTPase superfamily. Arf family.

It localises to the golgi apparatus. Functionally, GTP-binding protein that may be involved in protein trafficking. May modulate vesicle budding and uncoating within the Golgi apparatus. The sequence is that of ADP-ribosylation factor H (arrH) from Dictyostelium discoideum (Social amoeba).